The following is a 412-amino-acid chain: Phosphoglycerate kinase, plasmid (412 aa).

Substrate is bound by residues Asp39–Asn41, Arg55, His78–Arg81, Arg133, and Arg166. ATP contacts are provided by residues Lys217, Glu339, and Gly365–Thr368.

The protein belongs to the phosphoglycerate kinase family. In terms of assembly, monomer.

It is found in the cytoplasm. The catalysed reaction is (2R)-3-phosphoglycerate + ATP = (2R)-3-phospho-glyceroyl phosphate + ADP. It functions in the pathway carbohydrate biosynthesis; Calvin cycle. The sequence is that of Phosphoglycerate kinase, plasmid (cbbKP) from Cupriavidus necator (strain ATCC 17699 / DSM 428 / KCTC 22496 / NCIMB 10442 / H16 / Stanier 337) (Ralstonia eutropha).